The chain runs to 449 residues: Glycine receptor subunit alpha-2 (449 aa).

A signal peptide spans 1–27 (MTRPSVKLLTTLLACLMEMLNFRVSSG). The Extracellular portion of the chain corresponds to 28 to 255 (KDPDLLSSSS…FHLERQMGYY (228 aa)). Residue Asn70 is glycosylated (N-linked (GlcNAc...) asparagine). Residues Arg97 and Ser161 each contribute to the glycine site. Arg97 is a binding site for strychnine. A disulfide bond links Cys170 and Cys184. Zn(2+) is bound by residues Glu224 and Asp226. An intrachain disulfide couples Cys230 to Cys241. Thr236 is a glycine binding site. His247 is a binding site for Zn(2+). A helical transmembrane segment spans residues 256-276 (LIQMYIPSLLIVILSWVSFWI). At 277–282 (NMDAAP) the chain is on the cytoplasmic side. A helical membrane pass occupies residues 283-302 (ARVALGITTVLTMTTQSSGS). Residues 303 to 313 (RASLPKVSYVK) lie on the Extracellular side of the membrane. The helical transmembrane segment at 314-334 (AIDIWMAVCLLFVFAALLEYA) threads the bilayer. Topologically, residues 335 to 420 (GVNFVSRQQK…RAKRIDTISR (86 aa)) are cytoplasmic. A helical membrane pass occupies residues 421-441 (AAFPLAFLIFNVFYWITYKII). Residues 442–449 (RHESARKD) lie on the Extracellular side of the membrane.

This sequence belongs to the ligand-gated ion channel (TC 1.A.9) family.

The protein resides in the postsynaptic cell membrane. It localises to the synapse. It is found in the cell membrane. The protein localises to the cell projection. It catalyses the reaction chloride(in) = chloride(out). Channel opening is triggered by extracellular glycine. Channel opening is also triggered by taurine and beta-alanine. Inhibited by strychnine. In terms of biological role, subunit of heteromeric glycine-gated chloride channels. Plays a role in synaptic plasticity. Contributes to the generation of inhibitory postsynaptic currents, and is involved in the down-regulation of neuronal excitability. The sequence is that of Glycine receptor subunit alpha-2 (glra2) from Danio rerio (Zebrafish).